The chain runs to 198 residues: Twist-related protein 1 (198 aa).

Residues 1–18 show a composition bias toward low complexity; the sequence is MMQDVSSSPVSPADDSLS. The disordered stretch occupies residues 1–101; that stretch reads MMQDVSSSPV…GGGSPQSYEE (101 aa). The segment covering 34-43 has biased composition (basic residues); that stretch reads RGGRKRRSSR. Gly residues-rich tracts occupy residues 46-64 and 79-95; these read AGGG…GGDE and GCGG…GGGS. The bHLH domain maps to 104–155; sequence TQRVMANVRERQRTQSLNEAFAALRKIIPTLPSDKLSKIQTLKLAARYIDFL. Residues 157 to 187 form a sufficient for transactivation activity region; the sequence is QVLQSDELDSKMASCSYVAHERLSYAFSVWR.

Efficient DNA binding requires dimerization with another bHLH protein. Homodimer or heterodimer with E proteins such as TCF3. ID1 binds preferentially to TCF3 but does not interact efficiently with TWIST1 so ID1 levels control the amount of TCF3 available to dimerize with TWIST and thus determine the type of dimer formed.

The protein resides in the nucleus. Acts as a transcriptional regulator. Inhibits myogenesis by sequestrating E proteins, inhibiting trans-activation by MEF2, and inhibiting DNA-binding by MYOD1 through physical interaction. This interaction probably involves the basic domains of both proteins. Also represses expression of pro-inflammatory cytokines such as TNFA and IL1B. Regulates cranial suture patterning and fusion. Activates transcription as a heterodimer with E proteins. Regulates gene expression differentially, depending on dimer composition. Homodimers induce expression of FGFR2 and POSTN while heterodimers repress FGFR2 and POSTN expression and induce THBS1 expression. Heterodimerization is also required for osteoblast differentiation. Represses the activity of the circadian transcriptional activator: NPAS2-BMAL1 heterodimer. The polypeptide is Twist-related protein 1 (TWIST1) (Eulemur fulvus fulvus (Brown lemur)).